The primary structure comprises 377 residues: Glutamate 5-kinase (377 aa).

Lys20 contributes to the ATP binding site. Residues Ser60, Asp147, and Asn159 each contribute to the substrate site. 179–180 (TD) contributes to the ATP binding site. Residues 285–363 (AGRLVIDAGA…DKVHQVLGEA (79 aa)) enclose the PUA domain.

Belongs to the glutamate 5-kinase family.

It localises to the cytoplasm. It catalyses the reaction L-glutamate + ATP = L-glutamyl 5-phosphate + ADP. The protein operates within amino-acid biosynthesis; L-proline biosynthesis; L-glutamate 5-semialdehyde from L-glutamate: step 1/2. Functionally, catalyzes the transfer of a phosphate group to glutamate to form L-glutamate 5-phosphate. In Acinetobacter baylyi (strain ATCC 33305 / BD413 / ADP1), this protein is Glutamate 5-kinase.